The sequence spans 410 residues: Class E basic helix-loop-helix protein 41 (410 aa).

A Glycyl lysine isopeptide (Lys-Gly) (interchain with G-Cter in SUMO2) cross-link involves residue lysine 31. Residues 44 to 99 (TYKLPHRLIEKKRRDRINECIAQLKDLLPEHLKLTTLGHLEKAVVLELTLKHLKAL) enclose the bHLH domain. Lysine 121 is covalently cross-linked (Glycyl lysine isopeptide (Lys-Gly) (interchain with G-Cter in SUMO2)). The region spanning 131–166 (FHSGFQTCAKEVLQYLARFESWTPREPRCAQLVSHL) is the Orange domain. Disordered regions lie at residues 209–251 (IQRT…SAAP) and 371–410 (EVAP…KDAP). A Glycyl lysine isopeptide (Lys-Gly) (interchain with G-Cter in SUMO2) cross-link involves residue lysine 240.

Homodimer. Heterodimer with BHLHE40/DEC1. Interacts with CIART. Interacts with BMAL1 and RXRA. Interacts with NR0B2 and HNF1A. Highly expressed in the caudate putamen, pineal gland, granular cell layer of the cerebellum, olfactory bulb, piriform cortex, hippocampus and hypothalamic nuclei. Moderately expressed in skeletal muscle, heart. Weakly expressed in lung.

Its subcellular location is the nucleus. Transcriptional repressor involved in the regulation of the circadian rhythm by negatively regulating the activity of the clock genes and clock-controlled genes. Acts as the negative limb of a novel autoregulatory feedback loop (DEC loop) which differs from the one formed by the PER and CRY transcriptional repressors (PER/CRY loop). Both these loops are interlocked as it represses the expression of PER1 and in turn is repressed by PER1/2 and CRY1/2. Represses the activity of the circadian transcriptional activator: CLOCK-BMAL1 heterodimer by competing for the binding to E-box elements (5'-CACGTG-3') found within the promoters of its target genes. Negatively regulates its own expression and the expression of DBP and BHLHE41/DEC2. Acts as a corepressor of RXR and the RXR-LXR heterodimers and represses the ligand-induced RXRA/B/G, NR1H3/LXRA, NR1H4 and VDR transactivation activity. Inhibits HNF1A-mediated transactivation of CYP1A2, CYP2E1 and CYP3A11. This chain is Class E basic helix-loop-helix protein 41 (Bhlhb3), found in Rattus norvegicus (Rat).